The primary structure comprises 372 residues: tRNA-specific 2-thiouridylase MnmA (372 aa).

ATP-binding positions include 16–23 (GMSGGVDS) and M42. An interaction with target base in tRNA region spans residues 102–104 (NPD). C107 serves as the catalytic Nucleophile. Residues C107 and C205 are joined by a disulfide bond. G132 provides a ligand contact to ATP. Residues 155 to 157 (KDQ) form an interaction with tRNA region. The active-site Cysteine persulfide intermediate is the C205. The interval 317 to 318 (RY) is interaction with tRNA.

Belongs to the MnmA/TRMU family.

The protein resides in the cytoplasm. The catalysed reaction is S-sulfanyl-L-cysteinyl-[protein] + uridine(34) in tRNA + AH2 + ATP = 2-thiouridine(34) in tRNA + L-cysteinyl-[protein] + A + AMP + diphosphate + H(+). In terms of biological role, catalyzes the 2-thiolation of uridine at the wobble position (U34) of tRNA, leading to the formation of s(2)U34. In Shewanella denitrificans (strain OS217 / ATCC BAA-1090 / DSM 15013), this protein is tRNA-specific 2-thiouridylase MnmA.